Reading from the N-terminus, the 188-residue chain is Adenine phosphoribosyltransferase (188 aa).

This sequence belongs to the purine/pyrimidine phosphoribosyltransferase family. In terms of assembly, homodimer.

It is found in the cytoplasm. The enzyme catalyses AMP + diphosphate = 5-phospho-alpha-D-ribose 1-diphosphate + adenine. It functions in the pathway purine metabolism; AMP biosynthesis via salvage pathway; AMP from adenine: step 1/1. Functionally, catalyzes a salvage reaction resulting in the formation of AMP, that is energically less costly than de novo synthesis. This Burkholderia cenocepacia (strain HI2424) protein is Adenine phosphoribosyltransferase.